Here is a 97-residue protein sequence, read N- to C-terminus: Putative septation protein SpoVG (97 aa).

This sequence belongs to the SpoVG family.

Its function is as follows. Essential for sporulation. Interferes with or is a negative regulator of the pathway leading to asymmetric septation. The protein is Putative septation protein SpoVG of Bacillus licheniformis (strain ATCC 14580 / DSM 13 / JCM 2505 / CCUG 7422 / NBRC 12200 / NCIMB 9375 / NCTC 10341 / NRRL NRS-1264 / Gibson 46).